The primary structure comprises 326 residues: Acetyl-coenzyme A carboxylase carboxyl transferase subunit alpha (326 aa).

Residues 46–300 (EIEARAAELR…KEALLRHLDE (255 aa)) enclose the CoA carboxyltransferase C-terminal domain.

Belongs to the AccA family. In terms of assembly, acetyl-CoA carboxylase is a heterohexamer composed of biotin carboxyl carrier protein (AccB), biotin carboxylase (AccC) and two subunits each of ACCase subunit alpha (AccA) and ACCase subunit beta (AccD).

The protein localises to the cytoplasm. The catalysed reaction is N(6)-carboxybiotinyl-L-lysyl-[protein] + acetyl-CoA = N(6)-biotinyl-L-lysyl-[protein] + malonyl-CoA. Its pathway is lipid metabolism; malonyl-CoA biosynthesis; malonyl-CoA from acetyl-CoA: step 1/1. In terms of biological role, component of the acetyl coenzyme A carboxylase (ACC) complex. First, biotin carboxylase catalyzes the carboxylation of biotin on its carrier protein (BCCP) and then the CO(2) group is transferred by the carboxyltransferase to acetyl-CoA to form malonyl-CoA. The polypeptide is Acetyl-coenzyme A carboxylase carboxyl transferase subunit alpha (Gloeobacter violaceus (strain ATCC 29082 / PCC 7421)).